We begin with the raw amino-acid sequence, 274 residues long: Thiamine kinase (274 aa).

It belongs to the thiamine kinase family.

It catalyses the reaction thiamine + ATP = thiamine phosphate + ADP + H(+). The protein operates within cofactor biosynthesis; thiamine diphosphate biosynthesis; thiamine phosphate from thiamine: step 1/1. Catalyzes the ATP-dependent phosphorylation of thiamine to thiamine phosphate. Is involved in thiamine salvage. This Escherichia coli (strain SMS-3-5 / SECEC) protein is Thiamine kinase.